A 159-amino-acid chain; its full sequence is Transcription elongation factor GreA (159 aa).

Positions 46–73 form a coiled coil; the sequence is AEYHAAKEEQSFVEGRIKEIELKLSRMQ.

This sequence belongs to the GreA/GreB family.

Functionally, necessary for efficient RNA polymerase transcription elongation past template-encoded arresting sites. The arresting sites in DNA have the property of trapping a certain fraction of elongating RNA polymerases that pass through, resulting in locked ternary complexes. Cleavage of the nascent transcript by cleavage factors such as GreA or GreB allows the resumption of elongation from the new 3'terminus. GreA releases sequences of 2 to 3 nucleotides. The protein is Transcription elongation factor GreA of Vesicomyosocius okutanii subsp. Calyptogena okutanii (strain HA).